A 380-amino-acid polypeptide reads, in one-letter code: UPF0754 membrane protein Bsph_0374 (380 aa).

Transmembrane regions (helical) follow at residues 1–21 (MDNFIVTLLFMAIIGAAIGGV) and 357–377 (MITVLGAVLGGLIGIVQGLIV).

Belongs to the UPF0754 family.

Its subcellular location is the cell membrane. The polypeptide is UPF0754 membrane protein Bsph_0374 (Lysinibacillus sphaericus (strain C3-41)).